A 130-amino-acid polypeptide reads, in one-letter code: Large ribosomal subunit protein bL12 (130 aa).

The protein belongs to the bacterial ribosomal protein bL12 family. As to quaternary structure, homodimer. Part of the ribosomal stalk of the 50S ribosomal subunit. Forms a multimeric L10(L12)X complex, where L10 forms an elongated spine to which 2 to 4 L12 dimers bind in a sequential fashion. Binds GTP-bound translation factors.

Forms part of the ribosomal stalk which helps the ribosome interact with GTP-bound translation factors. Is thus essential for accurate translation. This is Large ribosomal subunit protein bL12 from Nostoc punctiforme (strain ATCC 29133 / PCC 73102).